We begin with the raw amino-acid sequence, 283 residues long: Probable cytochrome c oxidase subunit 3 (283 aa).

The next 6 helical transmembrane spans lie at 26–46, 51–71, 94–114, 179–199, 217–237, and 261–281; these read PWPVLTSFALLLLVIGGVSFM, FNIYILSAGIISVGYCLYSWW, IGMALFILTEIVFFGVFFASF, CVTALALTILLGIFFTTMQAY, FYLATGFHGAHVIIGTIFLII, and AWYWHFVDVVWLFLFTFVYIF.

Belongs to the cytochrome c oxidase subunit 3 family.

It localises to the cell membrane. The enzyme catalyses 4 Fe(II)-[cytochrome c] + O2 + 8 H(+)(in) = 4 Fe(III)-[cytochrome c] + 2 H2O + 4 H(+)(out). This is Probable cytochrome c oxidase subunit 3 (ctaE) from Rickettsia conorii (strain ATCC VR-613 / Malish 7).